Reading from the N-terminus, the 1155-residue chain is Alpha,alpha-trehalose-phosphate synthase [UDP-forming] 1 (1155 aa).

Positions 56–94 (LQRRRSVSSRGGSLRGSMDSLNDSGQNGAEDVIGVEDEE) are disordered. Over residues 63–72 (SSRGGSLRGS) the composition is skewed to low complexity.

The protein in the N-terminal section; belongs to the glycosyltransferase 20 family. It in the C-terminal section; belongs to the gob-1 trehalose phosphatase family.

The enzyme catalyses D-glucose 6-phosphate + UDP-alpha-D-glucose = alpha,alpha-trehalose 6-phosphate + UDP + H(+). Functionally, catalyzes the production of trehalose from glucose-6-phosphate and UDP-alpha-D-glucose in a 2 step process. The polypeptide is Alpha,alpha-trehalose-phosphate synthase [UDP-forming] 1 (tps-1) (Aphelenchoides avenae (Mycophagous nematode worm)).